Here is a 99-residue protein sequence, read N- to C-terminus: Integration host factor subunit alpha (99 aa).

It belongs to the bacterial histone-like protein family. In terms of assembly, heterodimer of an alpha and a beta chain.

Its function is as follows. This protein is one of the two subunits of integration host factor, a specific DNA-binding protein that functions in genetic recombination as well as in transcriptional and translational control. In Stenotrophomonas maltophilia (strain R551-3), this protein is Integration host factor subunit alpha.